The sequence spans 261 residues: Ribosomal RNA small subunit methyltransferase J (261 aa).

Residues 129–130 (ER) and Asp182 each bind S-adenosyl-L-methionine.

This sequence belongs to the methyltransferase superfamily. RsmJ family.

It localises to the cytoplasm. The catalysed reaction is guanosine(1516) in 16S rRNA + S-adenosyl-L-methionine = N(2)-methylguanosine(1516) in 16S rRNA + S-adenosyl-L-homocysteine + H(+). Functionally, specifically methylates the guanosine in position 1516 of 16S rRNA. This Desulfotalea psychrophila (strain LSv54 / DSM 12343) protein is Ribosomal RNA small subunit methyltransferase J.